Here is a 420-residue protein sequence, read N- to C-terminus: Phytoene synthase 1, chloroplastic (420 aa).

The transit peptide at 1–70 (MAAITLLRSA…GEIARTSPVY (70 aa)) directs the protein to the chloroplast.

Belongs to the phytoene/squalene synthase family. Expressed in leaves. Highly expressed in developing leaves. Expressed at low levels in roots.

It is found in the plastid. The protein resides in the chloroplast membrane. Its subcellular location is the chloroplast. It localises to the plastoglobule. It carries out the reaction 2 (2E,6E,10E)-geranylgeranyl diphosphate = 15-cis-phytoene + 2 diphosphate. Its function is as follows. Catalyzes the conversion of geranylgeranyl diphosphate to phytoene. Mediates the first committed step in carotenoid biosynthesis. In Oryza sativa subsp. japonica (Rice), this protein is Phytoene synthase 1, chloroplastic.